Here is a 273-residue protein sequence, read N- to C-terminus: Large ribosomal subunit protein uL2cy (273 aa).

Disordered stretches follow at residues 1–27 and 224–273; these read MAIHLYKTSTPSTRNGAVDSQVKSNPR and NPVD…RRRK.

The protein belongs to the universal ribosomal protein uL2 family. Part of the 50S ribosomal subunit.

The protein resides in the plastid. Its subcellular location is the chloroplast. This Liriodendron tulipifera (Tuliptree) protein is Large ribosomal subunit protein uL2cy (rpl2-B).